We begin with the raw amino-acid sequence, 545 residues long: Thermosome subunit alpha (545 aa).

This sequence belongs to the TCP-1 chaperonin family. In terms of assembly, forms a Heterooligomeric complex of two stacked eight-membered rings.

In terms of biological role, molecular chaperone; binds unfolded polypeptides in vitro, and has a weak ATPase activity. The chain is Thermosome subunit alpha (thsA) from Archaeoglobus fulgidus (strain ATCC 49558 / DSM 4304 / JCM 9628 / NBRC 100126 / VC-16).